The following is a 442-amino-acid chain: Dol-P-Man:Man(5)GlcNAc(2)-PP-Dol alpha-1,3-mannosyltransferase (442 aa).

Residues 1–34 (MAAPSSRPESNPPLYKQALDFALDVANGRHALSK) lie on the Lumenal side of the membrane. Residues 35–55 (LIPPALFLVDALLCGLIIWKV) traverse the membrane as a helical segment. Topologically, residues 56-84 (PYTEIDWAAYMEQVSQILSGERDYTKVRG) are cytoplasmic. A helical membrane pass occupies residues 85-105 (GTGPLVYPAAHVYIYTGLYHL). Over 106-111 (TDEGRN) the chain is Lumenal. Residues 112 to 132 (ILLAQQLFAGLYMVTLAVVMG) traverse the membrane as a helical segment. Topologically, residues 133-155 (CYWQAKAPPYLFPLLTLSKRLHS) are cytoplasmic. A helical transmembrane segment spans residues 156 to 176 (IFVLRCFNDCFAVLFLWLAIF). At 177–198 (FFQRRNWQAGALLYTLGLGVKM) the chain is on the lumenal side. A helical transmembrane segment spans residues 199–219 (TLLLSLPAVGIVLFLGSGSFV). A topological domain (cytoplasmic) is located at residue threonine 220. Residues 221-241 (TLQLVATMGLVQILIGVPFLA) form a helical membrane-spanning segment. The Lumenal segment spans residues 242–272 (HYPTEYLSRAFELSRQFFFKWTVNWRFVGEE). Residues 273-293 (IFLSKGFALTLLALHVLVLGI) form a helical membrane-spanning segment. At 294–333 (FITTRWIKPARKSLVQLISPVLLAGKPPLTVPEHRAAARD) the chain is on the cytoplasmic side. A helical transmembrane segment spans residues 334–354 (VTPRYIMTTILSANAVGLLFA). Residues 355–376 (RSLHYQFYAYVAWSTPFLLWRA) lie on the Lumenal side of the membrane. The helical transmembrane segment at 377–397 (GLHPVLVYLLWAVHEWAWNVF) threads the bilayer. Over 398–401 (PSTP) the chain is Cytoplasmic. The helical transmembrane segment at 402 to 422 (ASSAVVVGVLGVTVAGVWFGA) threads the bilayer. At 423–442 (REEWEPGMKSSSKKEEAAMR) the chain is on the lumenal side.

It belongs to the glycosyltransferase ALG3 family.

Its subcellular location is the endoplasmic reticulum membrane. The enzyme catalyses an alpha-D-Man-(1-&gt;2)-alpha-D-Man-(1-&gt;2)-alpha-D-Man-(1-&gt;3)-[alpha-D-Man-(1-&gt;6)]-beta-D-Man-(1-&gt;4)-beta-D-GlcNAc-(1-&gt;4)-alpha-D-GlcNAc-diphospho-di-trans,poly-cis-dolichol + a di-trans,poly-cis-dolichyl beta-D-mannosyl phosphate = an alpha-D-Man-(1-&gt;2)-alpha-D-Man-(1-&gt;2)-alpha-D-Man-(1-&gt;3)-[alpha-D-Man-(1-&gt;3)-alpha-D-Man-(1-&gt;6)]-beta-D-Man-(1-&gt;4)-beta-D-GlcNAc-(1-&gt;4)-alpha-D-GlcNAc-diphospho-di-trans,poly-cis-dolichol + a di-trans,poly-cis-dolichyl phosphate + H(+). Its pathway is protein modification; protein glycosylation. Dol-P-Man:Man(5)GlcNAc(2)-PP-Dol alpha-1,3-mannosyltransferase that operates in the biosynthetic pathway of dolichol-linked oligosaccharides, the glycan precursors employed in protein asparagine (N)-glycosylation. The assembly of dolichol-linked oligosaccharides begins on the cytosolic side of the endoplasmic reticulum membrane and finishes in its lumen. The sequential addition of sugars to dolichol pyrophosphate produces dolichol-linked oligosaccharides containing fourteen sugars, including two GlcNAcs, nine mannoses and three glucoses. Once assembled, the oligosaccharide is transferred from the lipid to nascent proteins by oligosaccharyltransferases. In the lumen of the endoplasmic reticulum, adds the first dolichyl beta-D-mannosyl phosphate derived mannose in an alpha-1,3 linkage to Man(5)GlcNAc(2)-PP-dolichol to produce Man(6)GlcNAc(2)-PP-dolichol. The sequence is that of Dol-P-Man:Man(5)GlcNAc(2)-PP-Dol alpha-1,3-mannosyltransferase (alg-3) from Neurospora crassa (strain ATCC 24698 / 74-OR23-1A / CBS 708.71 / DSM 1257 / FGSC 987).